Reading from the N-terminus, the 205-residue chain is Guanylate kinase (205 aa).

Residues 3–183 (GFVLLISGPS…SYEALRAILI (181 aa)) enclose the Guanylate kinase-like domain. ATP is bound at residue 10-17 (GPSGAGKS).

This sequence belongs to the guanylate kinase family.

It localises to the cytoplasm. It catalyses the reaction GMP + ATP = GDP + ADP. Its function is as follows. Essential for recycling GMP and indirectly, cGMP. The sequence is that of Guanylate kinase from Campylobacter jejuni (strain RM1221).